A 990-amino-acid polypeptide reads, in one-letter code: Leucine--tRNA ligase (990 aa).

A 'HIGH' region motif is present at residues 74–85 (PYPSGKGLHVGH). The interval 573–602 (LPINLPDVPDYSPKTFDPEDAESDPEAPLS) is disordered. The short motif at 763 to 767 (KMGKS) is the 'KMSKS' region element. K766 is an ATP binding site.

This sequence belongs to the class-I aminoacyl-tRNA synthetase family.

The protein localises to the cytoplasm. The enzyme catalyses tRNA(Leu) + L-leucine + ATP = L-leucyl-tRNA(Leu) + AMP + diphosphate. In Bifidobacterium adolescentis (strain ATCC 15703 / DSM 20083 / NCTC 11814 / E194a), this protein is Leucine--tRNA ligase.